Reading from the N-terminus, the 354-residue chain is Photosystem II D2 protein (354 aa).

Thr-2 carries the post-translational modification N-acetylthreonine. Thr-2 bears the Phosphothreonine mark. Residues Cys-42–Thr-62 form a helical membrane-spanning segment. His-119 provides a ligand contact to chlorophyll a. The helical transmembrane segment at Gly-126 to Pro-142 threads the bilayer. 2 residues coordinate pheophytin a: Gln-131 and Asn-144. A helical membrane pass occupies residues Val-154 to Gln-167. His-199 lines the chlorophyll a pocket. Residues Ala-209 to Asp-229 traverse the membrane as a helical segment. The a plastoquinone site is built by His-216 and Phe-263. Fe cation is bound at residue His-216. His-270 is a binding site for Fe cation. The chain crosses the membrane as a helical span at residues Gly-280–Arg-296.

Belongs to the reaction center PufL/M/PsbA/D family. As to quaternary structure, PSII is composed of 1 copy each of membrane proteins PsbA, PsbB, PsbC, PsbD, PsbE, PsbF, PsbH, PsbI, PsbJ, PsbK, PsbL, PsbM, PsbT, PsbX, PsbY, PsbZ, Psb30/Ycf12, at least 3 peripheral proteins of the oxygen-evolving complex and a large number of cofactors. It forms dimeric complexes. It depends on The D1/D2 heterodimer binds P680, chlorophylls that are the primary electron donor of PSII, and subsequent electron acceptors. It shares a non-heme iron and each subunit binds pheophytin, quinone, additional chlorophylls, carotenoids and lipids. There is also a Cl(-1) ion associated with D1 and D2, which is required for oxygen evolution. The PSII complex binds additional chlorophylls, carotenoids and specific lipids. as a cofactor.

It is found in the plastid. Its subcellular location is the chloroplast thylakoid membrane. The enzyme catalyses 2 a plastoquinone + 4 hnu + 2 H2O = 2 a plastoquinol + O2. Functionally, photosystem II (PSII) is a light-driven water:plastoquinone oxidoreductase that uses light energy to abstract electrons from H(2)O, generating O(2) and a proton gradient subsequently used for ATP formation. It consists of a core antenna complex that captures photons, and an electron transfer chain that converts photonic excitation into a charge separation. The D1/D2 (PsbA/PsbD) reaction center heterodimer binds P680, the primary electron donor of PSII as well as several subsequent electron acceptors. D2 is needed for assembly of a stable PSII complex. This Mesostigma viride (Green alga) protein is Photosystem II D2 protein.